A 153-amino-acid polypeptide reads, in one-letter code: MALRVVVGADDAGYEYKEALKGDLAADDRVTEVIDVGVGADEDTAYPHVAVAAARLIAEGKADRALLVCGTGLGVAISANKVPGIRAVTAHDSFSVERSVLSNNAQVLCFGQRVVGLELARRLAREWLGYEFDPTSKSAEKVQAICGYEPATS.

Cys-69 functions as the Proton acceptor in the catalytic mechanism.

This sequence belongs to the LacAB/RpiB family.

It carries out the reaction D-erythrulose 4-phosphate = D-erythrose 4-phosphate. Its pathway is carbohydrate metabolism; erythritol degradation. It participates in carbohydrate metabolism; D-threitol degradation. Functionally, catalyzes the isomerization of D-erythrulose-4P to D-erythrose-4P. Involved in the degradation pathways of erythritol and D-threitol, that allow M.smegmatis to grow on these compounds as the sole carbon source. This Mycolicibacterium smegmatis (strain ATCC 700084 / mc(2)155) (Mycobacterium smegmatis) protein is D-erythrulose-4-phosphate isomerase 1.